We begin with the raw amino-acid sequence, 159 residues long: Large ribosomal subunit protein uL11 (159 aa).

It belongs to the universal ribosomal protein uL11 family. Part of the ribosomal stalk of the 50S ribosomal subunit. Interacts with L10 and the large rRNA to form the base of the stalk. L10 forms an elongated spine to which L12 dimers bind in a sequential fashion forming a multimeric L10(L12)X complex.

Functionally, forms part of the ribosomal stalk which helps the ribosome interact with GTP-bound translation factors. This chain is Large ribosomal subunit protein uL11, found in Nitrosopumilus maritimus (strain SCM1).